A 101-amino-acid chain; its full sequence is NAD(P)H-quinone oxidoreductase subunit 4L, chloroplastic (101 aa).

Transmembrane regions (helical) follow at residues 2–22 (MFEL…YGLI), 32–52 (ICLE…SDLF), and 61–81 (IFAI…LSIL).

The protein belongs to the complex I subunit 4L family. NDH is composed of at least 16 different subunits, 5 of which are encoded in the nucleus.

Its subcellular location is the plastid. It is found in the chloroplast thylakoid membrane. The enzyme catalyses a plastoquinone + NADH + (n+1) H(+)(in) = a plastoquinol + NAD(+) + n H(+)(out). It carries out the reaction a plastoquinone + NADPH + (n+1) H(+)(in) = a plastoquinol + NADP(+) + n H(+)(out). In terms of biological role, NDH shuttles electrons from NAD(P)H:plastoquinone, via FMN and iron-sulfur (Fe-S) centers, to quinones in the photosynthetic chain and possibly in a chloroplast respiratory chain. The immediate electron acceptor for the enzyme in this species is believed to be plastoquinone. Couples the redox reaction to proton translocation, and thus conserves the redox energy in a proton gradient. The chain is NAD(P)H-quinone oxidoreductase subunit 4L, chloroplastic from Lolium perenne (Perennial ryegrass).